The primary structure comprises 523 residues: Leucine-rich repeat-containing protein 27 (523 aa).

A disordered region spans residues 1-26 (MEDTSPQAVAEKAAKDPKAAKDLKDD). Basic and acidic residues predominate over residues 12–26 (KAAKDPKAAKDLKDD). LRR repeat units lie at residues 55–76 (SSPV…FKIP), 77–98 (NLQQ…FFQL), 101–122 (NLTW…IGSH), 124–145 (HLKT…LGQV), and 147–168 (TLTA…IVQK). Disordered regions lie at residues 206–236 (QYPV…ADFF) and 372–394 (REQT…HSNM). Composition is skewed to basic and acidic residues over residues 227–236 (DQEKEKADFF) and 372–385 (REQT…RELS). 2 coiled-coil regions span residues 335 to 374 (VHAN…WREQ) and 463 to 494 (MQDI…TLNK). The interval 503-523 (GNLSLHPPASQPQNIFFNTKS) is disordered. Polar residues predominate over residues 513-523 (QPQNIFFNTKS).

The chain is Leucine-rich repeat-containing protein 27 (Lrrc27) from Mus musculus (Mouse).